A 699-amino-acid chain; its full sequence is Elongation factor G (699 aa).

In terms of domain architecture, tr-type G spans 8–288; sequence EDYRNFGIMA…AVVDYLPSPL (281 aa). Residues 17–24, 86–90, and 140–143 contribute to the GTP site; these read AHIDAGKT, DTPGH, and NKMD.

It belongs to the TRAFAC class translation factor GTPase superfamily. Classic translation factor GTPase family. EF-G/EF-2 subfamily.

It localises to the cytoplasm. Functionally, catalyzes the GTP-dependent ribosomal translocation step during translation elongation. During this step, the ribosome changes from the pre-translocational (PRE) to the post-translocational (POST) state as the newly formed A-site-bound peptidyl-tRNA and P-site-bound deacylated tRNA move to the P and E sites, respectively. Catalyzes the coordinated movement of the two tRNA molecules, the mRNA and conformational changes in the ribosome. The sequence is that of Elongation factor G from Rhizobium etli (strain ATCC 51251 / DSM 11541 / JCM 21823 / NBRC 15573 / CFN 42).